A 998-amino-acid chain; its full sequence is Antigenic heat-stable 120 kDa protein (998 aa).

Residues 1–69 (GGFMSQDHTG…LSGTISTDDQ (69 aa)) are disordered. Residues 12 to 21 (ENDEGYESDI) show a composition bias toward acidic residues. The segment covering 46-68 (TPASSTQSTPAISTLSGTISTDD) has biased composition (polar residues).

Its subcellular location is the cytoplasm. The sequence is that of Antigenic heat-stable 120 kDa protein (sca4) from Rickettsia akari.